The sequence spans 378 residues: Alcohol dehydrogenase (378 aa).

Fe cation-binding residues include aspartate 195, histidine 199, histidine 262, and histidine 274.

It belongs to the iron-containing alcohol dehydrogenase family. Requires Fe(2+) as cofactor. It depends on Mn(2+) as a cofactor.

The catalysed reaction is a primary alcohol + NAD(+) = an aldehyde + NADH + H(+). It catalyses the reaction butan-1-ol + NAD(+) = butanal + NADH + H(+). It carries out the reaction hexan-1-ol + NAD(+) = hexanal + NADH + H(+). The enzyme catalyses ethanol + NAD(+) = acetaldehyde + NADH + H(+). Its function is as follows. Thermostable type III alcohol dehydrogenase. For oxidation activity, the best substrates are 1-butanol and 1-hexanol, followed by ethanol. Shows lower activity with ethylene glycol, isopentanol, isopropanol and glycerol. Displays higher reduction activity in the presence of butanal, followed by acetaldehyde. Has lower activity with hexanal and acetone. The chain is Alcohol dehydrogenase from Thermococcus barophilus.